The chain runs to 348 residues: Anthranilate phosphoribosyltransferase (348 aa).

5-phospho-alpha-D-ribose 1-diphosphate is bound by residues Gly-80, 83 to 84 (GD), Thr-88, 90 to 93 (NVST), 108 to 116 (KHGNRSVSS), and Ser-120. Residue Gly-80 participates in anthranilate binding. Ser-92 provides a ligand contact to Mg(2+). Residue Asn-111 participates in anthranilate binding. Anthranilate is bound at residue Arg-166. Residues Asp-224 and Glu-225 each contribute to the Mg(2+) site.

The protein belongs to the anthranilate phosphoribosyltransferase family. As to quaternary structure, homodimer. It depends on Mg(2+) as a cofactor.

It catalyses the reaction N-(5-phospho-beta-D-ribosyl)anthranilate + diphosphate = 5-phospho-alpha-D-ribose 1-diphosphate + anthranilate. Its pathway is amino-acid biosynthesis; L-tryptophan biosynthesis; L-tryptophan from chorismate: step 2/5. Functionally, catalyzes the transfer of the phosphoribosyl group of 5-phosphorylribose-1-pyrophosphate (PRPP) to anthranilate to yield N-(5'-phosphoribosyl)-anthranilate (PRA). The protein is Anthranilate phosphoribosyltransferase of Sorangium cellulosum (strain So ce56) (Polyangium cellulosum (strain So ce56)).